Here is a 577-residue protein sequence, read N- to C-terminus: Proline--tRNA ligase (577 aa).

It belongs to the class-II aminoacyl-tRNA synthetase family. ProS type 1 subfamily. In terms of assembly, homodimer.

It is found in the cytoplasm. It carries out the reaction tRNA(Pro) + L-proline + ATP = L-prolyl-tRNA(Pro) + AMP + diphosphate. In terms of biological role, catalyzes the attachment of proline to tRNA(Pro) in a two-step reaction: proline is first activated by ATP to form Pro-AMP and then transferred to the acceptor end of tRNA(Pro). As ProRS can inadvertently accommodate and process non-cognate amino acids such as alanine and cysteine, to avoid such errors it has two additional distinct editing activities against alanine. One activity is designated as 'pretransfer' editing and involves the tRNA(Pro)-independent hydrolysis of activated Ala-AMP. The other activity is designated 'posttransfer' editing and involves deacylation of mischarged Ala-tRNA(Pro). The misacylated Cys-tRNA(Pro) is not edited by ProRS. In Helicobacter pylori (strain G27), this protein is Proline--tRNA ligase.